The chain runs to 379 residues: Glucose-1-phosphate adenylyltransferase (379 aa).

Alpha-D-glucose 1-phosphate contacts are provided by residues Gly-164, Glu-179 to Lys-180, and Ser-190.

This sequence belongs to the bacterial/plant glucose-1-phosphate adenylyltransferase family. In terms of assembly, homotetramer.

The catalysed reaction is alpha-D-glucose 1-phosphate + ATP + H(+) = ADP-alpha-D-glucose + diphosphate. Its pathway is glycan biosynthesis; glycogen biosynthesis. In terms of biological role, involved in the biosynthesis of ADP-glucose, a building block required for the elongation reactions to produce glycogen. Catalyzes the reaction between ATP and alpha-D-glucose 1-phosphate (G1P) to produce pyrophosphate and ADP-Glc. The polypeptide is Glucose-1-phosphate adenylyltransferase (Streptococcus agalactiae serotype Ia (strain ATCC 27591 / A909 / CDC SS700)).